The sequence spans 109 residues: Large ribosomal subunit protein uL24 (109 aa).

This sequence belongs to the universal ribosomal protein uL24 family. Part of the 50S ribosomal subunit.

Its function is as follows. One of two assembly initiator proteins, it binds directly to the 5'-end of the 23S rRNA, where it nucleates assembly of the 50S subunit. In terms of biological role, one of the proteins that surrounds the polypeptide exit tunnel on the outside of the subunit. This chain is Large ribosomal subunit protein uL24, found in Legionella pneumophila subsp. pneumophila (strain Philadelphia 1 / ATCC 33152 / DSM 7513).